The primary structure comprises 320 residues: F-box protein At2g02240 (320 aa).

In terms of domain architecture, F-box spans 58 to 104 (TSPFDVLPEDCISNIISFTSPRDACVAASVSKTFESAVSSDCVWDKF).

The sequence is that of F-box protein At2g02240 from Arabidopsis thaliana (Mouse-ear cress).